A 168-amino-acid polypeptide reads, in one-letter code: G/U mismatch-specific DNA glycosylase (168 aa).

The protein belongs to the uracil-DNA glycosylase (UDG) superfamily. TDG/mug family. Binds DNA as a monomer.

Its subcellular location is the cytoplasm. It carries out the reaction Specifically hydrolyzes mismatched double-stranded DNA and polynucleotides, releasing free uracil.. Functionally, excises ethenocytosine and uracil, which can arise by alkylation or deamination of cytosine, respectively, from the corresponding mispairs with guanine in ds-DNA. It is capable of hydrolyzing the carbon-nitrogen bond between the sugar-phosphate backbone of the DNA and the mispaired base. The complementary strand guanine functions in substrate recognition. Required for DNA damage lesion repair in stationary-phase cells. The sequence is that of G/U mismatch-specific DNA glycosylase from Citrobacter koseri (strain ATCC BAA-895 / CDC 4225-83 / SGSC4696).